A 513-amino-acid chain; its full sequence is Glycogen synthase (513 aa).

Lys-47 is an ADP-alpha-D-glucose binding site.

The protein belongs to the glycosyltransferase 1 family. Bacterial/plant glycogen synthase subfamily.

The enzyme catalyses [(1-&gt;4)-alpha-D-glucosyl](n) + ADP-alpha-D-glucose = [(1-&gt;4)-alpha-D-glucosyl](n+1) + ADP + H(+). It functions in the pathway glycan biosynthesis; glycogen biosynthesis. Its function is as follows. Synthesizes alpha-1,4-glucan chains using ADP-glucose. In Pseudomonas paraeruginosa (strain DSM 24068 / PA7) (Pseudomonas aeruginosa (strain PA7)), this protein is Glycogen synthase.